Here is a 199-residue protein sequence, read N- to C-terminus: Urease accessory protein UreG (199 aa).

A GTP-binding site is contributed by Gly8–Thr15.

The protein belongs to the SIMIBI class G3E GTPase family. UreG subfamily. Homodimer. UreH, UreF and UreG form a complex that acts as a GTP-hydrolysis-dependent molecular chaperone, activating the urease apoprotein by helping to assemble the nickel containing metallocenter of UreC. The UreE protein probably delivers the nickel.

Its subcellular location is the cytoplasm. Its function is as follows. Facilitates the functional incorporation of the urease nickel metallocenter. This process requires GTP hydrolysis, probably effectuated by UreG. The protein is Urease accessory protein UreG of Helicobacter pylori (strain J99 / ATCC 700824) (Campylobacter pylori J99).